The chain runs to 581 residues: Pectinesterase 3 (581 aa).

The first 55 residues, Met-1–Arg-55, serve as a signal peptide directing secretion. Asn-101, Asn-156, Asn-200, Asn-217, and Asn-268 each carry an N-linked (GlcNAc...) asparagine glycan. Positions 348 and 378 each coordinate substrate. Asp-401 functions as the Proton donor in the catalytic mechanism. The cysteines at positions 415 and 435 are disulfide-linked. Asp-422 acts as the Nucleophile in catalysis. N-linked (GlcNAc...) asparagine glycosylation occurs at Asn-477. Positions 486 and 488 each coordinate substrate.

In the N-terminal section; belongs to the PMEI family. This sequence in the C-terminal section; belongs to the pectinesterase family.

Its subcellular location is the secreted. The protein resides in the cell wall. It carries out the reaction [(1-&gt;4)-alpha-D-galacturonosyl methyl ester](n) + n H2O = [(1-&gt;4)-alpha-D-galacturonosyl](n) + n methanol + n H(+). The protein operates within glycan metabolism; pectin degradation; 2-dehydro-3-deoxy-D-gluconate from pectin: step 1/5. May have roles in the deposition of pectin in developing tissues and in the wall loosening and cell separation that occurs in cell expansion, fruit ripening and abscission. In Phaseolus vulgaris (Kidney bean), this protein is Pectinesterase 3 (MPE3).